A 386-amino-acid polypeptide reads, in one-letter code: MAALQYLESQKNAHPELGEWYNSLADLYQKKLWHQLTLKLEQFIALSVFQAGDALIQLYNNFITDFETRINLLKLAHFAVVVSRQYPEKEAAVSYLEGVIEKLKATKESRINEPISYIETQIALFKLEQGDQKECKKILDDGKSLLDSMTDIDPSVYANFFWVSSQYHKVRQEFSEFYKNALLYLAYTSVDSLSESFKLDLAFDLSLSALLGENIYNFGELLAHPILKSLLGTNVEWLYHILQAFNHGDLVQYQELCRVHNASLSAQPALVENEKKLLEKINILCLIEIIFSRPAEDRTIPLSVIAERTKLSIEDVEHLLMKSLSVHLIEGILDQVNGTVYVSWAQPRVLGIPQIKSLRDQLDSWVDKVHTTLLSVEAETPDLVAA.

An N-acetylalanine modification is found at Ala-2. The region spanning Phe-174 to Pro-347 is the PCI domain.

Belongs to the proteasome subunit S11 family. Component of the 19S regulatory particle (RP/PA700) lid subcomplex of the 26S proteasome. The 26S proteasome is composed of a core protease (CP), known as the 20S proteasome, capped at one or both ends by the 19S regulatory particle (RP/PA700). The RP/PA700 complex is composed of at least 17 different subunits in two subcomplexes, the base and the lid, which form the portions proximal and distal to the 20S proteolytic core, respectively. As to expression, ubiquitous with highest expression in flowers.

In terms of biological role, acts as a regulatory subunit of the 26S proteasome which is involved in the ATP-dependent degradation of ubiquitinated proteins. This chain is 26S proteasome non-ATPase regulatory subunit 13 homolog B (RPN9B), found in Arabidopsis thaliana (Mouse-ear cress).